Consider the following 201-residue polypeptide: Recombination protein RecR (201 aa).

The segment at 60–75 (CSRCGNVDTVDPCTVC) adopts a C4-type zinc-finger fold. A Toprim domain is found at 83–178 (SVIIVVEDVS…KITRLAHGVP (96 aa)).

This sequence belongs to the RecR family.

In terms of biological role, may play a role in DNA repair. It seems to be involved in an RecBC-independent recombinational process of DNA repair. It may act with RecF and RecO. The polypeptide is Recombination protein RecR (Rhizobium etli (strain ATCC 51251 / DSM 11541 / JCM 21823 / NBRC 15573 / CFN 42)).